A 981-amino-acid polypeptide reads, in one-letter code: Ubiquitin carboxyl-terminal hydrolase 37 (981 aa).

The short motif at 32 to 34 (KEN) is the KEN box 1 element. 2 consecutive short sequence motifs (D-box) follow at residues 71-79 (RLMLTLQDN) and 96-105 (RLFLDAVHQN). Residues 111-308 (MKPSQGSGSF…SAKRSLGFLP (198 aa)) are disordered. Serine 114 is subject to Phosphoserine. The span at 135 to 148 (RQLSYSDNQASSKR) shows a compositional bias: polar residues. Residues 149-159 (GSLETKDDIPF) are compositionally biased toward basic and acidic residues. Positions 160–168 (RKVLGNPGR) match the D-box 3 motif. Serine 170 carries the post-translational modification Phosphoserine. A compositionally biased stretch (polar residues) spans 172 to 195 (KTATGSGITVTRTIPSLTSASTPL). Serine 212 is modified (phosphoserine). The short motif at 223–225 (KEN) is the KEN box 2 element. A compositionally biased stretch (basic and acidic residues) spans 245–259 (SREKQLSLKQSEENR). The segment covering 266 to 300 (LQSSSFYGSRTGSKDYSSGSTNLDRTNVSGQTPSA) has biased composition (polar residues). In terms of domain architecture, USP spans 343–953 (QGFSNLGNTC…SGYIFFYMHK (611 aa)). Cysteine 352 serves as the catalytic Nucleophile. At serine 630 the chain carries Phosphoserine; by CDK2. Phosphoserine is present on residues serine 652 and serine 654. Disordered regions lie at residues 673–704 (GCEQ…GFDG) and 719–831 (KREA…EQKE). Composition is skewed to basic and acidic residues over residues 683-697 (KDSK…KSEL) and 719-734 (KREA…DDKP). In terms of domain architecture, UIM 1 spans 706–725 (SEEELLAAVLEMSKREASPT). Serine 772 bears the Phosphoserine mark. Basic and acidic residues predominate over residues 776 to 788 (ITKDCDENKENKT). The KEN box 3 signature appears at 784 to 786 (KEN). UIM domains lie at 808 to 827 (REEQ…QEAW) and 830 to 849 (KEDD…FNNS). The span at 813–824 (LQQALAQSLQEQ) shows a compositional bias: low complexity. Histidine 908 functions as the Proton acceptor in the catalytic mechanism.

The protein belongs to the peptidase C19 family. As to quaternary structure, interacts with FZR1/CDH1. Interacts with CDT1. Post-translationally, polyubiquitinated via 'Lys-11'-linked ubiquitin by the APC(CDH1) complex during late mitosis, leading to its degradation. Able to mediate auto-deubiquitination. Phosphorylated at Ser-630 by CDK2 during G1/S phase but not during mitosis; phosphorylation at Ser-630 is required for deubiquitinase activity. Also polyubiquitinated during early G1 phase, without leading to degradation. Phosphorylated at Ser-114 by ATM following DNA damage, which in turn increases its deubiquitination activity towards BLM.

The protein resides in the nucleus. Its subcellular location is the chromosome. It catalyses the reaction Thiol-dependent hydrolysis of ester, thioester, amide, peptide and isopeptide bonds formed by the C-terminal Gly of ubiquitin (a 76-residue protein attached to proteins as an intracellular targeting signal).. In terms of biological role, deubiquitinase that plays a role in different processes including cell cycle regulation, DNA replication or DNA damage response. Antagonizes the anaphase-promoting complex (APC/C) during G1/S transition by mediating deubiquitination of cyclin-A (CCNA1 and CCNA2), thereby promoting S phase entry. Specifically mediates deubiquitination of 'Lys-11'-linked polyubiquitin chains, a specific ubiquitin-linkage type mediated by the APC/C complex. Phosphorylation at Ser-628 during G1/S phase maximizes the deubiquitinase activity, leading to prevent degradation of cyclin-A (CCNA1 and CCNA2). Plays an important role in the regulation of DNA replication by stabilizing the licensing factor CDT1. Also plays an essential role beyond S-phase entry to promote the efficiency and fidelity of replication by deubiquitinating checkpoint kinase 1/CHK1, promoting its stability. Sustains the DNA damage response (DDR) by deubiquitinating and stabilizing the ATP-dependent DNA helicase BLM. Mechanistically, DNA double-strand breaks (DSB) promotes ATM-mediated phosphorylation of USP37 and enhances the binding between USP37 and BLM. Promotes cell migration by deubiquitinating and stabilizing the epithelial-mesenchymal transition (EMT)-inducing transcription factor SNAI. Plays a role in the regulation of mitotic spindle assembly and mitotic progression by associating with chromatin-associated WAPL and stabilizing it through deubiquitination. The polypeptide is Ubiquitin carboxyl-terminal hydrolase 37 (USP37) (Canis lupus familiaris (Dog)).